Here is a 374-residue protein sequence, read N- to C-terminus: Tryptophan--tRNA ligase (374 aa).

The 'HIGH' region signature appears at 81–89 (PSGPVHIGH). The short motif at 258-262 (KMSAS) is the 'KMSKS' region element.

This sequence belongs to the class-I aminoacyl-tRNA synthetase family.

Its subcellular location is the cytoplasm. It carries out the reaction tRNA(Trp) + L-tryptophan + ATP = L-tryptophyl-tRNA(Trp) + AMP + diphosphate + H(+). The protein is Tryptophan--tRNA ligase of Pyrobaculum arsenaticum (strain DSM 13514 / JCM 11321 / PZ6).